The sequence spans 217 residues: Oxygen-evolving enhancer protein 3, chloroplastic (217 aa).

2 disordered regions span residues Met-1–Gly-25 and Pro-73–Ala-95. The N-terminal 63 residues, Met-1–Ala-63, are a transit peptide targeting the chloroplast.

It belongs to the PsbQ family.

It localises to the plastid. The protein resides in the chloroplast thylakoid membrane. The polypeptide is Oxygen-evolving enhancer protein 3, chloroplastic (Oryza sativa subsp. indica (Rice)).